The sequence spans 156 residues: ATP synthase subunit b (156 aa).

A helical transmembrane segment spans residues 5-25; that stretch reads VTLIGQTVAFIIFVWFCMKFV.

It belongs to the ATPase B chain family. As to quaternary structure, F-type ATPases have 2 components, F(1) - the catalytic core - and F(0) - the membrane proton channel. F(1) has five subunits: alpha(3), beta(3), gamma(1), delta(1), epsilon(1). F(0) has three main subunits: a(1), b(2) and c(10-14). The alpha and beta chains form an alternating ring which encloses part of the gamma chain. F(1) is attached to F(0) by a central stalk formed by the gamma and epsilon chains, while a peripheral stalk is formed by the delta and b chains.

The protein resides in the cell inner membrane. F(1)F(0) ATP synthase produces ATP from ADP in the presence of a proton or sodium gradient. F-type ATPases consist of two structural domains, F(1) containing the extramembraneous catalytic core and F(0) containing the membrane proton channel, linked together by a central stalk and a peripheral stalk. During catalysis, ATP synthesis in the catalytic domain of F(1) is coupled via a rotary mechanism of the central stalk subunits to proton translocation. In terms of biological role, component of the F(0) channel, it forms part of the peripheral stalk, linking F(1) to F(0). The sequence is that of ATP synthase subunit b from Shewanella loihica (strain ATCC BAA-1088 / PV-4).